The primary structure comprises 510 residues: ATP synthase subunit alpha (510 aa).

169–176 is an ATP binding site; the sequence is GDRQTGKT.

It belongs to the ATPase alpha/beta chains family. F-type ATPases have 2 components, CF(1) - the catalytic core - and CF(0) - the membrane proton channel. CF(1) has five subunits: alpha(3), beta(3), gamma(1), delta(1), epsilon(1). CF(0) has three main subunits: a(1), b(2) and c(9-12). The alpha and beta chains form an alternating ring which encloses part of the gamma chain. CF(1) is attached to CF(0) by a central stalk formed by the gamma and epsilon chains, while a peripheral stalk is formed by the delta and b chains.

It is found in the cell membrane. The enzyme catalyses ATP + H2O + 4 H(+)(in) = ADP + phosphate + 5 H(+)(out). In terms of biological role, produces ATP from ADP in the presence of a proton gradient across the membrane. The alpha chain is a regulatory subunit. The protein is ATP synthase subunit alpha of Thermomicrobium roseum (strain ATCC 27502 / DSM 5159 / P-2).